The chain runs to 563 residues: Arginine--tRNA ligase (563 aa).

Residues 121–131 (PNIAKPMSMGH) carry the 'HIGH' region motif.

Belongs to the class-I aminoacyl-tRNA synthetase family. In terms of assembly, monomer.

It is found in the cytoplasm. It catalyses the reaction tRNA(Arg) + L-arginine + ATP = L-arginyl-tRNA(Arg) + AMP + diphosphate. The sequence is that of Arginine--tRNA ligase from Leuconostoc mesenteroides subsp. mesenteroides (strain ATCC 8293 / DSM 20343 / BCRC 11652 / CCM 1803 / JCM 6124 / NCDO 523 / NBRC 100496 / NCIMB 8023 / NCTC 12954 / NRRL B-1118 / 37Y).